The primary structure comprises 334 residues: Spermidine synthase 1 (334 aa).

Positions 1–37 (MAAPENTLHSTDSPLKRQREDEVNGVSDTLSKEPQPN) are disordered. Over residues 26-37 (VSDTLSKEPQPN) the composition is skewed to polar residues. The region spanning 44–281 (PGWFSEISPM…GMIGFMLCST (238 aa)) is the PABS domain. An S-adenosyl 3-(methylsulfanyl)propylamine-binding site is contributed by glutamine 75. Putrescine is bound at residue tyrosine 105. Residues glutamine 106, aspartate 130, glutamate 150, 181–182 (DG), and aspartate 200 contribute to the S-adenosyl 3-(methylsulfanyl)propylamine site. Catalysis depends on aspartate 200, which acts as the Proton acceptor. Residues 200-203 (DSSD) and tyrosine 269 contribute to the putrescine site.

The protein belongs to the spermidine/spermine synthase family.

The catalysed reaction is S-adenosyl 3-(methylsulfanyl)propylamine + putrescine = S-methyl-5'-thioadenosine + spermidine + H(+). It functions in the pathway amine and polyamine biosynthesis; spermidine biosynthesis; spermidine from putrescine: step 1/1. In Pisum sativum (Garden pea), this protein is Spermidine synthase 1 (SPDSYN1).